A 148-amino-acid chain; its full sequence is Endoribonuclease YbeY (148 aa).

Residues His113, His117, and His123 each coordinate Zn(2+).

This sequence belongs to the endoribonuclease YbeY family. Requires Zn(2+) as cofactor.

It localises to the cytoplasm. Its function is as follows. Single strand-specific metallo-endoribonuclease involved in late-stage 70S ribosome quality control and in maturation of the 3' terminus of the 16S rRNA. This chain is Endoribonuclease YbeY, found in Borrelia duttonii (strain Ly).